Consider the following 311-residue polypeptide: Putative S-adenosyl-L-methionine-dependent methyltransferase MMAR_0358 (311 aa).

S-adenosyl-L-methionine contacts are provided by residues D132 and 161–162 (DL).

It belongs to the UPF0677 family.

Exhibits S-adenosyl-L-methionine-dependent methyltransferase activity. The chain is Putative S-adenosyl-L-methionine-dependent methyltransferase MMAR_0358 from Mycobacterium marinum (strain ATCC BAA-535 / M).